We begin with the raw amino-acid sequence, 346 residues long: uncharacterized protein (346 aa).

This is an uncharacterized protein from Schizosaccharomyces pombe (strain 972 / ATCC 24843) (Fission yeast).